The chain runs to 242 residues: Sugar fermentation stimulation protein homolog (242 aa).

It belongs to the SfsA family.

This Nitratidesulfovibrio vulgaris (strain DP4) (Desulfovibrio vulgaris) protein is Sugar fermentation stimulation protein homolog.